We begin with the raw amino-acid sequence, 192 residues long: Molybdenum cofactor guanylyltransferase (192 aa).

Residues 10-12 (LAG), Lys23, Asn51, Asp69, and Asp99 each bind GTP. A Mg(2+)-binding site is contributed by Asp99.

Belongs to the MobA family. In terms of assembly, monomer. Requires Mg(2+) as cofactor.

It is found in the cytoplasm. It carries out the reaction Mo-molybdopterin + GTP + H(+) = Mo-molybdopterin guanine dinucleotide + diphosphate. Transfers a GMP moiety from GTP to Mo-molybdopterin (Mo-MPT) cofactor (Moco or molybdenum cofactor) to form Mo-molybdopterin guanine dinucleotide (Mo-MGD) cofactor. This is Molybdenum cofactor guanylyltransferase from Haemophilus influenzae (strain 86-028NP).